The chain runs to 262 residues: MTRIHPTAIVEPGAQIDESVEIGPYAIVGPHVTIGARTTIGSHSVIEGHTTLGEDNRIGHYASVGGRPQDMKYKNEPTRLVIGNRNTIREFTTIHTGTVQDAGVTTLGDDNWIMAYVHIGHDCRVGNNVILSSNAQMAGHVEIGDFAIIGGMSGVHQFVRIGAHSMLGGASALVQDVPPFVIAAGNKAEPHGINVEGLRRRGFSPDAISALRSAYRLLYKNGLSLDEAKVQLRELASAGGDGDAPVAALVAFVDASQRGIIR.

This sequence belongs to the transferase hexapeptide repeat family. LpxA subfamily. As to quaternary structure, homotrimer.

The protein resides in the cytoplasm. The enzyme catalyses a (3R)-hydroxyacyl-[ACP] + UDP-N-acetyl-alpha-D-glucosamine = a UDP-3-O-[(3R)-3-hydroxyacyl]-N-acetyl-alpha-D-glucosamine + holo-[ACP]. It participates in glycolipid biosynthesis; lipid IV(A) biosynthesis; lipid IV(A) from (3R)-3-hydroxytetradecanoyl-[acyl-carrier-protein] and UDP-N-acetyl-alpha-D-glucosamine: step 1/6. Involved in the biosynthesis of lipid A, a phosphorylated glycolipid that anchors the lipopolysaccharide to the outer membrane of the cell. The protein is Acyl-[acyl-carrier-protein]--UDP-N-acetylglucosamine O-acyltransferase of Burkholderia vietnamiensis (strain G4 / LMG 22486) (Burkholderia cepacia (strain R1808)).